The sequence spans 228 residues: HTH-type transcriptional repressor RspR (228 aa).

Residues 11-78 form the HTH gntR-type domain; it reads QPVNQQIYRI…PQRGSYVNKI (68 aa). A DNA-binding region (H-T-H motif) is located at residues 38-57; that stretch reads EKEVSVRFNVSRQPVREAFI.

Functionally, repressor of the rspAB operon. Acts by binding directly to the upstream region of rspA. This is HTH-type transcriptional repressor RspR (rspR) from Escherichia coli (strain K12).